We begin with the raw amino-acid sequence, 265 residues long: Chanoclavine-I dehydrogenase easD (265 aa).

The signal sequence occupies residues Met1–Ala20. Positions 18, 66, 132, 169, 173, and 205 each coordinate NADP(+). Tyr169 (proton donor) is an active-site residue. Residue Lys173 is the Lowers pKa of active site Tyr of the active site.

It belongs to the short-chain dehydrogenases/reductases (SDR) family. Homotetramer.

It carries out the reaction chanoclavine-I + NAD(+) = chanoclavine-I aldehyde + NADH + H(+). It functions in the pathway alkaloid biosynthesis; ergot alkaloid biosynthesis. In terms of biological role, chanoclavine-I dehydrogenase; part of the gene cluster that mediates the biosynthesis of fungal ergot alkaloid. DmaW catalyzes the first step of ergot alkaloid biosynthesis by condensing dimethylallyl diphosphate (DMAP) and tryptophan to form 4-dimethylallyl-L-tryptophan. The second step is catalyzed by the methyltransferase easF that methylates 4-dimethylallyl-L-tryptophan in the presence of S-adenosyl-L-methionine, resulting in the formation of 4-dimethylallyl-L-abrine. The catalase easC and the FAD-dependent oxidoreductase easE then transform 4-dimethylallyl-L-abrine to chanoclavine-I which is further oxidized by easD in the presence of NAD(+), resulting in the formation of chanoclavine-I aldehyde. Chanoclavine-I aldehyde is the precursor of ergoamides and ergopeptines in Clavicipitaceae, and clavine-type alcaloids such as fumiclavine in Trichocomaceae. However, the metabolites downstream of chanoclavine-I aldehyde in Arthrodermataceae have not been identified yet. In Trichophyton verrucosum (strain HKI 0517), this protein is Chanoclavine-I dehydrogenase easD.